A 33-amino-acid polypeptide reads, in one-letter code: Pardaxin P-4 (33 aa).

It belongs to the pardaxin family. Monomer. In aqueous solution exists as a tetramer.

Its subcellular location is the secreted. The protein localises to the target cell membrane. Its function is as follows. Exhibits unusual shark repellent and surfactant properties. Forms voltage-dependent, ion-permeable channels in membranes. At high concentration causes cell membrane lysis. This chain is Pardaxin P-4, found in Pardachirus marmoratus (Finless sole).